A 299-amino-acid polypeptide reads, in one-letter code: Probable alpha-L-glutamate ligase (299 aa).

The region spanning 104 to 287 is the ATP-grasp domain; the sequence is LQLLAREGIE…VSGKIIEFLE (184 aa). Residues lysine 141, 178–179, aspartate 187, and 211–213 each bind ATP; these read EF and RSN. Mg(2+) contacts are provided by aspartate 248, glutamate 260, and asparagine 262. Positions 248, 260, and 262 each coordinate Mn(2+).

Belongs to the RimK family. Mg(2+) serves as cofactor. Requires Mn(2+) as cofactor.

The chain is Probable alpha-L-glutamate ligase from Trichodesmium erythraeum (strain IMS101).